The sequence spans 251 residues: Coproheme decarboxylase (251 aa).

Fe-coproporphyrin III is bound by residues Arg133, 147–151 (YPMSK), His174, Gln187, and Ser225. Residue Tyr147 is part of the active site.

The protein belongs to the ChdC family. Type 1 subfamily. Fe-coproporphyrin III serves as cofactor.

It catalyses the reaction Fe-coproporphyrin III + 2 H2O2 + 2 H(+) = heme b + 2 CO2 + 4 H2O. The catalysed reaction is Fe-coproporphyrin III + H2O2 + H(+) = harderoheme III + CO2 + 2 H2O. It carries out the reaction harderoheme III + H2O2 + H(+) = heme b + CO2 + 2 H2O. Its pathway is porphyrin-containing compound metabolism; protoheme biosynthesis. In terms of biological role, involved in coproporphyrin-dependent heme b biosynthesis. Catalyzes the decarboxylation of Fe-coproporphyrin III (coproheme) to heme b (protoheme IX), the last step of the pathway. The reaction occurs in a stepwise manner with a three-propionate intermediate. In Listeria welshimeri serovar 6b (strain ATCC 35897 / DSM 20650 / CCUG 15529 / CIP 8149 / NCTC 11857 / SLCC 5334 / V8), this protein is Coproheme decarboxylase.